Here is a 621-residue protein sequence, read N- to C-terminus: 1-deoxy-D-xylulose-5-phosphate synthase (621 aa).

Thiamine diphosphate-binding positions include His80 and 121–123 (GHS). Mg(2+) is bound at residue Asp152. Thiamine diphosphate-binding positions include 153-154 (GA), Asn181, Tyr288, and Glu370. Residue Asn181 participates in Mg(2+) binding.

This sequence belongs to the transketolase family. DXPS subfamily. In terms of assembly, homodimer. Mg(2+) serves as cofactor. It depends on thiamine diphosphate as a cofactor.

The enzyme catalyses D-glyceraldehyde 3-phosphate + pyruvate + H(+) = 1-deoxy-D-xylulose 5-phosphate + CO2. It functions in the pathway metabolic intermediate biosynthesis; 1-deoxy-D-xylulose 5-phosphate biosynthesis; 1-deoxy-D-xylulose 5-phosphate from D-glyceraldehyde 3-phosphate and pyruvate: step 1/1. Catalyzes the acyloin condensation reaction between C atoms 2 and 3 of pyruvate and glyceraldehyde 3-phosphate to yield 1-deoxy-D-xylulose-5-phosphate (DXP). The chain is 1-deoxy-D-xylulose-5-phosphate synthase from Vibrio campbellii (strain ATCC BAA-1116).